We begin with the raw amino-acid sequence, 231 residues long: Quercetin 2,3-dioxygenase (231 aa).

His57, His59, His101, and Glu103 together coordinate a divalent metal cation.

It belongs to the pirin family. Zn(2+) serves as cofactor. Requires Co(2+) as cofactor. Fe(2+) is required as a cofactor.

It catalyses the reaction quercetin + O2 = 2-(3,4-dihydroxybenzoyloxy)-4,6-dihydroxybenzoate + CO. It functions in the pathway flavonoid metabolism; quercetin degradation. With respect to regulation, inhibited by kojic acid, sodium diethyldithiocarbamate and 1,10-phenanthroline monohydrochloride. In terms of biological role, has quercetin 2,3-dioxygenase activity in vitro. Its physiological role is unknown; however, may provide a mechanism that would avoid inhibition of key cellular proteins, such as DNA gyrase, by quercetin. The protein is Quercetin 2,3-dioxygenase (yhhW) of Escherichia coli (strain K12).